Reading from the N-terminus, the 224-residue chain is MSLMNLPEESRPREKLLALGPKSLTDAELLAIFLRTGIQGMNAIELADKLLKEFGSLRKLLSSDENEFCSHKGLGAAKFAQLQAVVEMTERYLFEKIEKEDALTSPEHTKRYLTRMLRDRHREAFYVLFLDNQHRVLKGEILFEGTIDAAAVYPREVVKRSIDYNAAAIILAHNHPSGVAEPSQADRRITKRISDAVELVDIRVLDHFVIGDGEIVSFAERGWI.

The region spanning 102-224 is the MPN domain; sequence ALTSPEHTKR…IVSFAERGWI (123 aa). 3 residues coordinate Zn(2+): histidine 173, histidine 175, and aspartate 186. Residues 173-186 carry the JAMM motif motif; that stretch reads HNHPSGVAEPSQAD.

It belongs to the UPF0758 family.

The polypeptide is UPF0758 protein VFMJ11_0123 (Aliivibrio fischeri (strain MJ11) (Vibrio fischeri)).